Consider the following 856-residue polypeptide: Protein translocase subunit SecA (856 aa).

Residues Q77, 95-99, and D534 contribute to the ATP site; that span reads GEGKT.

The protein belongs to the SecA family. In terms of assembly, monomer and homodimer. Part of the essential Sec protein translocation apparatus which comprises SecA, SecYEG and auxiliary proteins SecDF. Other proteins may also be involved.

Its subcellular location is the cell inner membrane. It localises to the cytoplasm. The catalysed reaction is ATP + H2O + cellular proteinSide 1 = ADP + phosphate + cellular proteinSide 2.. Its function is as follows. Part of the Sec protein translocase complex. Interacts with the SecYEG preprotein conducting channel. Has a central role in coupling the hydrolysis of ATP to the transfer of proteins into and across the cell membrane, serving as an ATP-driven molecular motor driving the stepwise translocation of polypeptide chains across the membrane. This Thermosipho africanus (strain TCF52B) protein is Protein translocase subunit SecA.